Here is a 154-residue protein sequence, read N- to C-terminus: SsrA-binding protein (154 aa).

This sequence belongs to the SmpB family.

The protein localises to the cytoplasm. Functionally, required for rescue of stalled ribosomes mediated by trans-translation. Binds to transfer-messenger RNA (tmRNA), required for stable association of tmRNA with ribosomes. tmRNA and SmpB together mimic tRNA shape, replacing the anticodon stem-loop with SmpB. tmRNA is encoded by the ssrA gene; the 2 termini fold to resemble tRNA(Ala) and it encodes a 'tag peptide', a short internal open reading frame. During trans-translation Ala-aminoacylated tmRNA acts like a tRNA, entering the A-site of stalled ribosomes, displacing the stalled mRNA. The ribosome then switches to translate the ORF on the tmRNA; the nascent peptide is terminated with the 'tag peptide' encoded by the tmRNA and targeted for degradation. The ribosome is freed to recommence translation, which seems to be the essential function of trans-translation. The sequence is that of SsrA-binding protein from Staphylococcus aureus (strain Mu3 / ATCC 700698).